The primary structure comprises 529 residues: Bifunctional purine biosynthesis protein PurH (529 aa).

Positions 1 to 148 (MQQRRPVRRA…KNHKDVAIVV (148 aa)) constitute an MGS-like domain.

This sequence belongs to the PurH family.

The enzyme catalyses (6R)-10-formyltetrahydrofolate + 5-amino-1-(5-phospho-beta-D-ribosyl)imidazole-4-carboxamide = 5-formamido-1-(5-phospho-D-ribosyl)imidazole-4-carboxamide + (6S)-5,6,7,8-tetrahydrofolate. It carries out the reaction IMP + H2O = 5-formamido-1-(5-phospho-D-ribosyl)imidazole-4-carboxamide. Its pathway is purine metabolism; IMP biosynthesis via de novo pathway; 5-formamido-1-(5-phospho-D-ribosyl)imidazole-4-carboxamide from 5-amino-1-(5-phospho-D-ribosyl)imidazole-4-carboxamide (10-formyl THF route): step 1/1. The protein operates within purine metabolism; IMP biosynthesis via de novo pathway; IMP from 5-formamido-1-(5-phospho-D-ribosyl)imidazole-4-carboxamide: step 1/1. This is Bifunctional purine biosynthesis protein PurH from Klebsiella pneumoniae subsp. pneumoniae (strain ATCC 700721 / MGH 78578).